The primary structure comprises 263 residues: Methylesterase 2 (263 aa).

Serine 85 (acyl-ester intermediate) is an active-site residue. Catalysis depends on charge relay system residues aspartate 213 and histidine 241.

It belongs to the AB hydrolase superfamily. Methylesterase family.

The enzyme catalyses methyl (indol-3-yl)acetate + H2O = (indol-3-yl)acetate + methanol + H(+). The catalysed reaction is methyl (-)-jasmonate + H2O = jasmonate + methanol + H(+). It carries out the reaction methyl salicylate + H2O = salicylate + methanol + H(+). Its pathway is plant hormone biosynthesis. The protein operates within lipid metabolism; oxylipin biosynthesis. With respect to regulation, esterase activity is down-regulated by salicylic acid (SA). Down-regulated by agrochemicals Paraoxon, 3,4-DCl and Profenofos. In terms of biological role, methylesterase shown to have carboxylesterase activity, methyl indole-3-acetic acid (MeIAA) esterase activity, methyl salicylate (MeSA) esterase activity and methyl jasmonate (MeJA) esterase activity in vitro. The sequence is that of Methylesterase 2 from Arabidopsis thaliana (Mouse-ear cress).